We begin with the raw amino-acid sequence, 948 residues long: Insulin receptor substrate 1 (948 aa).

A PH domain is found at 8 to 109; that stretch reads GMALSGYLKK…WLDKLLVLQR (102 aa). An IRS-type PTB domain is found at 122–236; it reads YDQVWQVVIQ…SAMSAKTESN (115 aa). Positions 247-270 are disordered; that stretch reads PDLSHEPMRKRSSSANEASKPINV. Phosphoserine occurs at positions 286 and 287. A compositionally biased stretch (polar residues) spans 304–329; the sequence is RNGTLSESSNQTYFGSNHGLRSNTIS. The disordered stretch occupies residues 304 to 373; the sequence is RNGTLSESSN…SDDNGSFSHY (70 aa). Position 342 is a phosphoserine (Ser-342). Phosphotyrosine; by INSR is present on Tyr-410. The short motif at 410–413 is the YXXM motif 1 element; the sequence is YIPM. A disordered region spans residues 528–559; that stretch reads ANRSQSSITKEGTSYSTSSNRQKKSTSAPLLS. Residues 529–556 show a composition bias toward polar residues; the sequence is NRSQSSITKEGTSYSTSSNRQKKSTSAP. A Phosphoserine modification is found at Ser-554. The YXXM motif 2 signature appears at 640 to 643; that stretch reads YLEM. Positions 703–734 are disordered; sequence EKKSNSPLNETPCSLKPTDVESNSHDEHSTNN. Residues 720–731 are compositionally biased toward basic and acidic residues; that stretch reads TDVESNSHDEHS. Position 891 is a phosphotyrosine; by INSR (Tyr-891). The disordered stretch occupies residues 907 to 948; it reads YLKRGSRESPPVSACPGDGNTYAKIDFDQSDSSSSSSNIFNT. Phosphoserine occurs at positions 912 and 915. Tyr-928 is subject to Phosphotyrosine; by INSR. Residues 936–948 show a composition bias toward low complexity; it reads SDSSSSSSNIFNT.

As to quaternary structure, bindings to phosphatidylinositol 3-kinase and SHP2.

Its function is as follows. Activates phosphatidylinositol 3-kinase when bound to the regulatory p85 subunit. May mediate the control of various cellular processes by insulin-like peptides. When phosphorylated by the insulin receptor binds specifically to various cellular proteins containing SH2 domains. Involved in control of cell proliferation, cell size, and body and organ growth throughout development. Also has a role in a signaling pathway controlling the physiological response required to endure periods of low nutrient conditions. Insulin/insulin-like growth factor (IGF) signaling pathway has a role in regulating aging and is necessary in the ovary for vitellogenic maturation. The chain is Insulin receptor substrate 1 from Drosophila erecta (Fruit fly).